The primary structure comprises 72 residues: MAEFRRRRAKLRVKAEEIDYKNVELLKRFVSDKGKINPSRLTGANAKLQRKIAKAVKRARNIALIPYTRTEK.

Belongs to the bacterial ribosomal protein bS18 family. Part of the 30S ribosomal subunit. Forms a tight heterodimer with protein bS6.

In terms of biological role, binds as a heterodimer with protein bS6 to the central domain of the 16S rRNA, where it helps stabilize the platform of the 30S subunit. The protein is Small ribosomal subunit protein bS18 of Fusobacterium nucleatum subsp. nucleatum (strain ATCC 25586 / DSM 15643 / BCRC 10681 / CIP 101130 / JCM 8532 / KCTC 2640 / LMG 13131 / VPI 4355).